The primary structure comprises 83 residues: ATP synthase subunit c (83 aa).

The next 2 membrane-spanning stretches (helical) occupy residues 9–29 (LICV…GIGI) and 51–71 (MVFM…GLVI).

This sequence belongs to the ATPase C chain family. F-type ATPases have 2 components, F(1) - the catalytic core - and F(0) - the membrane proton channel. F(1) has five subunits: alpha(3), beta(3), gamma(1), delta(1), epsilon(1). F(0) has three main subunits: a(1), b(2) and c(10-14). The alpha and beta chains form an alternating ring which encloses part of the gamma chain. F(1) is attached to F(0) by a central stalk formed by the gamma and epsilon chains, while a peripheral stalk is formed by the delta and b chains.

It is found in the cell inner membrane. Functionally, f(1)F(0) ATP synthase produces ATP from ADP in the presence of a proton or sodium gradient. F-type ATPases consist of two structural domains, F(1) containing the extramembraneous catalytic core and F(0) containing the membrane proton channel, linked together by a central stalk and a peripheral stalk. During catalysis, ATP synthesis in the catalytic domain of F(1) is coupled via a rotary mechanism of the central stalk subunits to proton translocation. In terms of biological role, key component of the F(0) channel; it plays a direct role in translocation across the membrane. A homomeric c-ring of between 10-14 subunits forms the central stalk rotor element with the F(1) delta and epsilon subunits. In Desulfotalea psychrophila (strain LSv54 / DSM 12343), this protein is ATP synthase subunit c.